Reading from the N-terminus, the 543-residue chain is Ipecac alkaloid beta-glucosidase 3 (543 aa).

Residues Gln36, His140, 185-186, Tyr350, Glu422, Trp471, and Phe487 each bind a beta-D-glucoside; that span reads NE. Catalysis depends on Glu186, which acts as the Proton donor. Glu422 (nucleophile) is an active-site residue.

This sequence belongs to the glycosyl hydrolase 1 family.

Its subcellular location is the cytoplasm. It localises to the cytosol. It catalyses the reaction deacetylipecoside + H2O = deacetylipecoside aglycone + D-glucose. The enzyme catalyses deacetylisoipecoside + H2O = deacetylisoipecoside aglycone + D-glucose. Its pathway is alkaloid biosynthesis. Beta-glucosidase catalyzing deglucosylation on N-deacetylisoipecoside and N-deacetylipecoside. The protein is Ipecac alkaloid beta-glucosidase 3 of Carapichea ipecacuanha (Ipecac).